Here is a 76-residue protein sequence, read N- to C-terminus: Exodeoxyribonuclease 7 small subunit (76 aa).

The protein belongs to the XseB family. In terms of assembly, heterooligomer composed of large and small subunits.

The protein resides in the cytoplasm. The enzyme catalyses Exonucleolytic cleavage in either 5'- to 3'- or 3'- to 5'-direction to yield nucleoside 5'-phosphates.. Bidirectionally degrades single-stranded DNA into large acid-insoluble oligonucleotides, which are then degraded further into small acid-soluble oligonucleotides. The sequence is that of Exodeoxyribonuclease 7 small subunit from Lactiplantibacillus plantarum (strain ATCC BAA-793 / NCIMB 8826 / WCFS1) (Lactobacillus plantarum).